The following is a 391-amino-acid chain: Phosphoglycerate kinase (391 aa).

Substrate contacts are provided by residues 21–23 (DLN), Arg-36, 59–62 (HLGR), Arg-114, and Arg-147. Residues Lys-198, Glu-315, and 344–347 (GGDT) each bind ATP.

This sequence belongs to the phosphoglycerate kinase family. As to quaternary structure, monomer.

The protein resides in the cytoplasm. It catalyses the reaction (2R)-3-phosphoglycerate + ATP = (2R)-3-phospho-glyceroyl phosphate + ADP. The protein operates within carbohydrate degradation; glycolysis; pyruvate from D-glyceraldehyde 3-phosphate: step 2/5. In Actinobacillus succinogenes (strain ATCC 55618 / DSM 22257 / CCUG 43843 / 130Z), this protein is Phosphoglycerate kinase.